The sequence spans 177 residues: NADH-quinone oxidoreductase subunit B (177 aa).

Residues Cys-56, Cys-57, Cys-121, and Cys-151 each coordinate [4Fe-4S] cluster.

It belongs to the complex I 20 kDa subunit family. As to quaternary structure, NDH-1 is composed of 14 different subunits. Subunits NuoB, C, D, E, F, and G constitute the peripheral sector of the complex. It depends on [4Fe-4S] cluster as a cofactor.

The protein resides in the cell inner membrane. The catalysed reaction is a quinone + NADH + 5 H(+)(in) = a quinol + NAD(+) + 4 H(+)(out). NDH-1 shuttles electrons from NADH, via FMN and iron-sulfur (Fe-S) centers, to quinones in the respiratory chain. Couples the redox reaction to proton translocation (for every two electrons transferred, four hydrogen ions are translocated across the cytoplasmic membrane), and thus conserves the redox energy in a proton gradient. This chain is NADH-quinone oxidoreductase subunit B, found in Ruegeria pomeroyi (strain ATCC 700808 / DSM 15171 / DSS-3) (Silicibacter pomeroyi).